Here is a 195-residue protein sequence, read N- to C-terminus: 3-isopropylmalate dehydratase small subunit (195 aa).

The protein belongs to the LeuD family. LeuD type 1 subfamily. As to quaternary structure, heterodimer of LeuC and LeuD.

The enzyme catalyses (2R,3S)-3-isopropylmalate = (2S)-2-isopropylmalate. The protein operates within amino-acid biosynthesis; L-leucine biosynthesis; L-leucine from 3-methyl-2-oxobutanoate: step 2/4. In terms of biological role, catalyzes the isomerization between 2-isopropylmalate and 3-isopropylmalate, via the formation of 2-isopropylmaleate. The chain is 3-isopropylmalate dehydratase small subunit from Frankia casuarinae (strain DSM 45818 / CECT 9043 / HFP020203 / CcI3).